A 153-amino-acid chain; its full sequence is uncharacterized protein (153 aa).

An N-acetylalanine modification is found at A2.

This is an uncharacterized protein from Arabidopsis thaliana (Mouse-ear cress).